A 203-amino-acid polypeptide reads, in one-letter code: Suppressor of RNA silencing p3 (203 aa).

The protein belongs to the tenuiviruses p3 protein family. As to quaternary structure, homodimer.

It is found in the host cytoplasm. Functionally, acts as a suppressor of RNA-mediated gene silencing, also known as post-transcriptional gene silencing (PTGS), presumably through the binding of dsRNA. This is Suppressor of RNA silencing p3 from Oryza sativa (Rice).